The primary structure comprises 326 residues: tRNA(Ile)-lysidine synthase (326 aa).

ATP is bound at residue 33 to 38 (SGGPDS).

This sequence belongs to the tRNA(Ile)-lysidine synthase family.

The protein resides in the cytoplasm. The enzyme catalyses cytidine(34) in tRNA(Ile2) + L-lysine + ATP = lysidine(34) in tRNA(Ile2) + AMP + diphosphate + H(+). Its function is as follows. Ligates lysine onto the cytidine present at position 34 of the AUA codon-specific tRNA(Ile) that contains the anticodon CAU, in an ATP-dependent manner. Cytidine is converted to lysidine, thus changing the amino acid specificity of the tRNA from methionine to isoleucine. The polypeptide is tRNA(Ile)-lysidine synthase (Novosphingobium aromaticivorans (strain ATCC 700278 / DSM 12444 / CCUG 56034 / CIP 105152 / NBRC 16084 / F199)).